Consider the following 404-residue polypeptide: Probable tRNA sulfurtransferase (404 aa).

In terms of domain architecture, THUMP spans 61-166 (EAVSERLKDV…SGYSYIMCDE (106 aa)). ATP is bound by residues 184–185 (LL), 209–210 (HF), Arg-266, Gly-288, and Gln-297.

This sequence belongs to the ThiI family.

The protein localises to the cytoplasm. The enzyme catalyses [ThiI sulfur-carrier protein]-S-sulfanyl-L-cysteine + a uridine in tRNA + 2 reduced [2Fe-2S]-[ferredoxin] + ATP + H(+) = [ThiI sulfur-carrier protein]-L-cysteine + a 4-thiouridine in tRNA + 2 oxidized [2Fe-2S]-[ferredoxin] + AMP + diphosphate. It carries out the reaction [ThiS sulfur-carrier protein]-C-terminal Gly-Gly-AMP + S-sulfanyl-L-cysteinyl-[cysteine desulfurase] + AH2 = [ThiS sulfur-carrier protein]-C-terminal-Gly-aminoethanethioate + L-cysteinyl-[cysteine desulfurase] + A + AMP + 2 H(+). It functions in the pathway cofactor biosynthesis; thiamine diphosphate biosynthesis. Catalyzes the ATP-dependent transfer of a sulfur to tRNA to produce 4-thiouridine in position 8 of tRNAs, which functions as a near-UV photosensor. Also catalyzes the transfer of sulfur to the sulfur carrier protein ThiS, forming ThiS-thiocarboxylate. This is a step in the synthesis of thiazole, in the thiamine biosynthesis pathway. The sulfur is donated as persulfide by IscS. The chain is Probable tRNA sulfurtransferase from Bacillus cereus (strain ZK / E33L).